Reading from the N-terminus, the 112-residue chain is Protein FAM32A (112 aa).

The disordered stretch occupies residues 15–35 (KGCGDMSLGKKKKKKNKANDQ).

Belongs to the FAM32 family.

It localises to the nucleus. Functionally, may induce G2 arrest and apoptosis. May also increase cell sensitivity to apoptotic stimuli. The sequence is that of Protein FAM32A (fam32a) from Xenopus tropicalis (Western clawed frog).